Consider the following 93-residue polypeptide: Phosphoribosyl-ATP pyrophosphatase (93 aa).

It belongs to the PRA-PH family.

The protein resides in the cytoplasm. It catalyses the reaction 1-(5-phospho-beta-D-ribosyl)-ATP + H2O = 1-(5-phospho-beta-D-ribosyl)-5'-AMP + diphosphate + H(+). It functions in the pathway amino-acid biosynthesis; L-histidine biosynthesis; L-histidine from 5-phospho-alpha-D-ribose 1-diphosphate: step 2/9. This Rhodococcus erythropolis (strain PR4 / NBRC 100887) protein is Phosphoribosyl-ATP pyrophosphatase.